The primary structure comprises 128 residues: 3-aminoacrylate deaminase RutC (128 aa).

The protein belongs to the RutC family.

The enzyme catalyses (Z)-3-aminoacrylate + H2O + H(+) = 3-oxopropanoate + NH4(+). Its function is as follows. Involved in pyrimidine catabolism. Catalyzes the deamination of 3-aminoacrylate to malonic semialdehyde, a reaction that can also occur spontaneously. RutC may facilitate the reaction and modulate the metabolic fitness, rather than catalyzing essential functions. This Agrobacterium fabrum (strain C58 / ATCC 33970) (Agrobacterium tumefaciens (strain C58)) protein is 3-aminoacrylate deaminase RutC.